A 390-amino-acid chain; its full sequence is Dual-specificity RNA methyltransferase RlmN (390 aa).

Glutamate 110 (proton acceptor) is an active-site residue. The 240-residue stretch at 116 to 355 folds into the Radical SAM core domain; the sequence is EADRATLCVS…VIIRKTRGDD (240 aa). Residues cysteine 123 and cysteine 360 are joined by a disulfide bond. The [4Fe-4S] cluster site is built by cysteine 130, cysteine 134, and cysteine 137. Residues 184–185, serine 216, 238–240, and asparagine 317 contribute to the S-adenosyl-L-methionine site; these read GE and SLH. Cysteine 360 (S-methylcysteine intermediate) is an active-site residue.

This sequence belongs to the radical SAM superfamily. RlmN family. It depends on [4Fe-4S] cluster as a cofactor.

The protein localises to the cytoplasm. It carries out the reaction adenosine(2503) in 23S rRNA + 2 reduced [2Fe-2S]-[ferredoxin] + 2 S-adenosyl-L-methionine = 2-methyladenosine(2503) in 23S rRNA + 5'-deoxyadenosine + L-methionine + 2 oxidized [2Fe-2S]-[ferredoxin] + S-adenosyl-L-homocysteine. The enzyme catalyses adenosine(37) in tRNA + 2 reduced [2Fe-2S]-[ferredoxin] + 2 S-adenosyl-L-methionine = 2-methyladenosine(37) in tRNA + 5'-deoxyadenosine + L-methionine + 2 oxidized [2Fe-2S]-[ferredoxin] + S-adenosyl-L-homocysteine. Functionally, specifically methylates position 2 of adenine 2503 in 23S rRNA and position 2 of adenine 37 in tRNAs. m2A2503 modification seems to play a crucial role in the proofreading step occurring at the peptidyl transferase center and thus would serve to optimize ribosomal fidelity. This chain is Dual-specificity RNA methyltransferase RlmN, found in Haemophilus influenzae (strain PittEE).